We begin with the raw amino-acid sequence, 64 residues long: Prokaryotic ubiquitin-like protein Pup (64 aa).

The segment covering 1–11 has biased composition (basic and acidic residues); sequence MAQEQTKRGGG. A disordered region spans residues 1 to 36; sequence MAQEQTKRGGGGDDDDVTDLGGPAGQERREKLAEDT. The ARC ATPase binding stretch occupies residues 21 to 58; sequence GGPAGQERREKLAEDTDDLLDEIDDVLEENAEDFVRAY. A coiled-coil region spans residues 24 to 52; it reads AGQERREKLAEDTDDLLDEIDDVLEENAE. At Gln64 the chain carries Deamidated glutamine. Gln64 participates in a covalent cross-link: Isoglutamyl lysine isopeptide (Gln-Lys) (interchain with K-? in acceptor proteins).

It belongs to the prokaryotic ubiquitin-like protein family. As to quaternary structure, strongly interacts with the proteasome-associated ATPase ARC through a hydrophobic interface; the interacting region of Pup lies in its C-terminal half. There is one Pup binding site per ARC hexamer ring. Post-translationally, is modified by deamidation of its C-terminal glutamine to glutamate by the deamidase Dop, a prerequisite to the subsequent pupylation process.

The protein operates within protein degradation; proteasomal Pup-dependent pathway. In terms of biological role, protein modifier that is covalently attached to lysine residues of substrate proteins, thereby targeting them for proteasomal degradation. The tagging system is termed pupylation. The chain is Prokaryotic ubiquitin-like protein Pup from Mycobacteroides abscessus (strain ATCC 19977 / DSM 44196 / CCUG 20993 / CIP 104536 / JCM 13569 / NCTC 13031 / TMC 1543 / L948) (Mycobacterium abscessus).